Consider the following 411-residue polypeptide: 1-deoxy-D-xylulose 5-phosphate reductoisomerase (411 aa).

5 residues coordinate NADPH: threonine 12, glycine 13, serine 14, isoleucine 15, and asparagine 127. Residue lysine 128 participates in 1-deoxy-D-xylulose 5-phosphate binding. Residue glutamate 129 coordinates NADPH. A Mn(2+)-binding site is contributed by aspartate 153. Positions 154, 155, 189, and 212 each coordinate 1-deoxy-D-xylulose 5-phosphate. Glutamate 155 contributes to the Mn(2+) binding site. Residue glycine 218 participates in NADPH binding. 1-deoxy-D-xylulose 5-phosphate-binding residues include serine 225, asparagine 230, lysine 231, and glutamate 234. Residue glutamate 234 coordinates Mn(2+).

This sequence belongs to the DXR family. Requires Mg(2+) as cofactor. Mn(2+) is required as a cofactor.

The enzyme catalyses 2-C-methyl-D-erythritol 4-phosphate + NADP(+) = 1-deoxy-D-xylulose 5-phosphate + NADPH + H(+). It functions in the pathway isoprenoid biosynthesis; isopentenyl diphosphate biosynthesis via DXP pathway; isopentenyl diphosphate from 1-deoxy-D-xylulose 5-phosphate: step 1/6. In terms of biological role, catalyzes the NADPH-dependent rearrangement and reduction of 1-deoxy-D-xylulose-5-phosphate (DXP) to 2-C-methyl-D-erythritol 4-phosphate (MEP). The sequence is that of 1-deoxy-D-xylulose 5-phosphate reductoisomerase from Colwellia psychrerythraea (strain 34H / ATCC BAA-681) (Vibrio psychroerythus).